A 341-amino-acid chain; its full sequence is UDP-N-acetylenolpyruvoylglucosamine reductase (341 aa).

One can recognise an FAD-binding PCMH-type domain in the interval 15-185 (VEQSCLSLIE…TAVGLRLPKA (171 aa)). Residue arginine 161 is part of the active site. Serine 231 serves as the catalytic Proton donor. Glutamate 327 is an active-site residue.

It belongs to the MurB family. FAD serves as cofactor.

The protein localises to the cytoplasm. It carries out the reaction UDP-N-acetyl-alpha-D-muramate + NADP(+) = UDP-N-acetyl-3-O-(1-carboxyvinyl)-alpha-D-glucosamine + NADPH + H(+). It functions in the pathway cell wall biogenesis; peptidoglycan biosynthesis. Cell wall formation. This Shewanella sp. (strain ANA-3) protein is UDP-N-acetylenolpyruvoylglucosamine reductase.